We begin with the raw amino-acid sequence, 111 residues long: Small ribosomal subunit protein bS16 (111 aa).

It belongs to the bacterial ribosomal protein bS16 family.

The polypeptide is Small ribosomal subunit protein bS16 (Rickettsia africae (strain ESF-5)).